We begin with the raw amino-acid sequence, 259 residues long: DNA adenine methylase (259 aa).

S-adenosyl-L-methionine is bound by residues Y7, K11, D50, and D171.

This sequence belongs to the N(4)/N(6)-methyltransferase family. In terms of assembly, monomer.

It carries out the reaction a 2'-deoxyadenosine in DNA + S-adenosyl-L-methionine = an N(6)-methyl-2'-deoxyadenosine in DNA + S-adenosyl-L-homocysteine + H(+). Functionally, an alpha subtpe methyltransferase that recognizes the double-stranded sequence 5'-GATC-3' and methylates A-2 on both strands. May prevent degradation of viral DNA by the host restriction-modification antiviral defense system. The protein is DNA adenine methylase of Enterobacteria phage T2 (Bacteriophage T2).